The sequence spans 154 residues: Large ribosomal subunit protein uL23 (154 aa).

The protein belongs to the universal ribosomal protein uL23 family.

Functionally, this protein binds to a specific region on the 26S rRNA. This chain is Large ribosomal subunit protein uL23 (RPL23A), found in Daucus carota (Wild carrot).